The primary structure comprises 449 residues: Glutathione reductase (449 aa).

FAD contacts are provided by S15, G16, E35, T42, C43, and K51. Glutathione is bound at residue S15. The cysteines at positions 43 and 48 are disulfide-linked. Y99 serves as a coordination point for glutathione. A115 is an FAD binding site. The NADP(+) site is built by G175, I178, E181, R198, R204, and G261. FAD is bound by residues D302 and T310. A340 contributes to the NADP(+) binding site. FAD is bound at residue H435. The active-site Proton acceptor is the H435.

Belongs to the class-I pyridine nucleotide-disulfide oxidoreductase family. As to quaternary structure, homodimer. Requires FAD as cofactor.

It localises to the cytoplasm. The enzyme catalyses 2 glutathione + NADP(+) = glutathione disulfide + NADPH + H(+). Its pathway is xenobiotic degradation; (2,4,5-trichlorophenoxy)acetate degradation. Catalyzes the reduction of glutathione disulfide (GSSG) to reduced glutathione (GSH). Constitutes the major mechanism to maintain a high GSH:GSSG ratio in the cytosol. The sequence is that of Glutathione reductase (gor) from Burkholderia cepacia (Pseudomonas cepacia).